We begin with the raw amino-acid sequence, 323 residues long: CD-NTase-associated protein 12 (323 aa).

The 117-residue stretch at 4–120 (RIFIGSSSEQ…LDGITVAKFT (117 aa)) folds into the TIR domain. Residue glutamate 84 is part of the active site. Residues 154–323 (STALAIGYYN…YVNVLTNVKL (170 aa)) are STING domain. Positions 164, 165, 234, 237, 259, 262, and 263 each coordinate 3',3'-c-di-GMP.

In the C-terminal section; belongs to the bacterial STING family. Forms homodimers which subsequently form filaments. In vitro in the presence of c-di-GMP forms filaments up to 300 nm in length with an ordered array of parallel-stacked subunits, where the TIR domains form one face of the filament and the STING domains form the other face. Antiparallel double-filament structures are also seen. 3'3'-cGAMP weakly induces filament formation, while 2'3'-cGAMP does not.

It catalyses the reaction NAD(+) + H2O = ADP-D-ribose + nicotinamide + H(+). With respect to regulation, NAD(+) hydrolase activity is strongly stimulated by c-di-GMP, weakly by 3'3'-cGAMP, very weakly by c-di-AMP and not at all by 2'3'-cGAMP. Self-association of TIR domains is required for NADase activity. Effector protein of a CBASS antiviral system with NAD(+) hydrolase activity. CBASS (cyclic oligonucleotide-based antiphage signaling system) provides immunity against bacteriophage. The CD-NTase protein synthesizes cyclic nucleotides in response to infection; these serve as specific second messenger signals. The signals activate a diverse range of effectors, leading to bacterial cell death and thus abortive phage infection. A type I-D(GG) CBASS system. In terms of biological role, upon activation by 3'3'-c-di-GMP forms filaments which hydrolyze NAD(+); filament formation is required for enzyme activation. Induction in an E.coli strain that synthesizes c-di-GMP leads to significant growth inhibition. Binds c-di-GMP and 3'3'-cGAMP (3'3'-cyclic GMP-AMP), but not c-di-AMP, 2'3'-cGAMP or cUMP-AMP. The sequence is that of CD-NTase-associated protein 12 from Sphingobacterium faecium (strain DSM 11690 / JCM 21820 / NBRC 15299 / NCIMB 13408 / KS 0470).